The sequence spans 333 residues: uncharacterized protein (333 aa).

Residues 234–333 (PPLAPTSAPA…GLSSEFDSDD (100 aa)) are disordered. Residues 251-265 (VPPPVPAPPTPPPQE) show a composition bias toward pro residues. Polar residues predominate over residues 324 to 333 (GLSSEFDSDD).

It localises to the cell projection. Its subcellular location is the cilium. The protein localises to the flagellum. This is an uncharacterized protein from Homo sapiens (Human).